Reading from the N-terminus, the 426-residue chain is Glutamate-1-semialdehyde 2,1-aminomutase (426 aa).

An N6-(pyridoxal phosphate)lysine modification is found at Lys-265.

This sequence belongs to the class-III pyridoxal-phosphate-dependent aminotransferase family. HemL subfamily. In terms of assembly, homodimer. The cofactor is pyridoxal 5'-phosphate.

It is found in the cytoplasm. It carries out the reaction (S)-4-amino-5-oxopentanoate = 5-aminolevulinate. It functions in the pathway porphyrin-containing compound metabolism; protoporphyrin-IX biosynthesis; 5-aminolevulinate from L-glutamyl-tRNA(Glu): step 2/2. The sequence is that of Glutamate-1-semialdehyde 2,1-aminomutase from Actinobacillus pleuropneumoniae serotype 3 (strain JL03).